Here is a 448-residue protein sequence, read N- to C-terminus: Histidinol dehydrogenase (448 aa).

3 residues coordinate NAD(+): Tyr-136, Gln-197, and Asn-220. Substrate-binding residues include Ser-243, Gln-265, and His-268. Zn(2+) is bound by residues Gln-265 and His-268. Active-site proton acceptor residues include Glu-333 and His-334. Substrate contacts are provided by His-334, Asp-367, Glu-421, and His-426. Asp-367 contacts Zn(2+). His-426 is a Zn(2+) binding site.

Belongs to the histidinol dehydrogenase family. Zn(2+) is required as a cofactor.

It catalyses the reaction L-histidinol + 2 NAD(+) + H2O = L-histidine + 2 NADH + 3 H(+). It functions in the pathway amino-acid biosynthesis; L-histidine biosynthesis; L-histidine from 5-phospho-alpha-D-ribose 1-diphosphate: step 9/9. Its function is as follows. Catalyzes the sequential NAD-dependent oxidations of L-histidinol to L-histidinaldehyde and then to L-histidine. In Pseudomonas syringae pv. tomato (strain ATCC BAA-871 / DC3000), this protein is Histidinol dehydrogenase.